The following is a 435-amino-acid chain: Adenylosuccinate synthetase (435 aa).

Residues Gly-19–Lys-25 and Gly-49–Thr-51 contribute to the GTP site. Asp-20 serves as the catalytic Proton acceptor. 2 residues coordinate Mg(2+): Asp-20 and Gly-49. IMP is bound by residues Asp-20–Lys-23, Asn-47–His-50, Thr-139, Arg-153, Asn-233, Thr-248, and Arg-312. His-50 serves as the catalytic Proton donor. Val-308–Arg-314 lines the substrate pocket. GTP-binding positions include Arg-314, Lys-340–Asp-342, and Gly-422–Gly-424.

This sequence belongs to the adenylosuccinate synthetase family. In terms of assembly, homodimer. Requires Mg(2+) as cofactor.

The protein resides in the cytoplasm. The catalysed reaction is IMP + L-aspartate + GTP = N(6)-(1,2-dicarboxyethyl)-AMP + GDP + phosphate + 2 H(+). The protein operates within purine metabolism; AMP biosynthesis via de novo pathway; AMP from IMP: step 1/2. In terms of biological role, plays an important role in the de novo pathway and in the salvage pathway of purine nucleotide biosynthesis. Catalyzes the first committed step in the biosynthesis of AMP from IMP. The polypeptide is Adenylosuccinate synthetase (Brugia malayi (Filarial nematode worm)).